Here is a 459-residue protein sequence, read N- to C-terminus: Bifunctional protein GlmU (459 aa).

Residues 1-229 (MSNYAIILAA…FDESLGVNDR (229 aa)) are pyrophosphorylase. Residues 8 to 11 (LAAG), lysine 22, glutamine 72, and 77 to 78 (GT) each bind UDP-N-acetyl-alpha-D-glucosamine. Residue aspartate 102 participates in Mg(2+) binding. UDP-N-acetyl-alpha-D-glucosamine-binding residues include glycine 139, glutamate 154, asparagine 169, and asparagine 227. Asparagine 227 serves as a coordination point for Mg(2+). Positions 230 to 250 (VALATAEKVMRHRIARQHMVN) are linker. Positions 251 to 459 (GVTVVNPDSA…NKKPHHPSQK (209 aa)) are N-acetyltransferase. Residues arginine 332 and lysine 350 each coordinate UDP-N-acetyl-alpha-D-glucosamine. The active-site Proton acceptor is histidine 362. The UDP-N-acetyl-alpha-D-glucosamine site is built by tyrosine 365 and asparagine 376. Residues alanine 379, 385–386 (NY), serine 404, alanine 422, and arginine 439 each bind acetyl-CoA.

This sequence in the N-terminal section; belongs to the N-acetylglucosamine-1-phosphate uridyltransferase family. In the C-terminal section; belongs to the transferase hexapeptide repeat family. Homotrimer. The cofactor is Mg(2+).

The protein localises to the cytoplasm. The enzyme catalyses alpha-D-glucosamine 1-phosphate + acetyl-CoA = N-acetyl-alpha-D-glucosamine 1-phosphate + CoA + H(+). The catalysed reaction is N-acetyl-alpha-D-glucosamine 1-phosphate + UTP + H(+) = UDP-N-acetyl-alpha-D-glucosamine + diphosphate. The protein operates within nucleotide-sugar biosynthesis; UDP-N-acetyl-alpha-D-glucosamine biosynthesis; N-acetyl-alpha-D-glucosamine 1-phosphate from alpha-D-glucosamine 6-phosphate (route II): step 2/2. It functions in the pathway nucleotide-sugar biosynthesis; UDP-N-acetyl-alpha-D-glucosamine biosynthesis; UDP-N-acetyl-alpha-D-glucosamine from N-acetyl-alpha-D-glucosamine 1-phosphate: step 1/1. It participates in bacterial outer membrane biogenesis; LPS lipid A biosynthesis. Its function is as follows. Catalyzes the last two sequential reactions in the de novo biosynthetic pathway for UDP-N-acetylglucosamine (UDP-GlcNAc). The C-terminal domain catalyzes the transfer of acetyl group from acetyl coenzyme A to glucosamine-1-phosphate (GlcN-1-P) to produce N-acetylglucosamine-1-phosphate (GlcNAc-1-P), which is converted into UDP-GlcNAc by the transfer of uridine 5-monophosphate (from uridine 5-triphosphate), a reaction catalyzed by the N-terminal domain. The sequence is that of Bifunctional protein GlmU from Streptococcus agalactiae serotype V (strain ATCC BAA-611 / 2603 V/R).